We begin with the raw amino-acid sequence, 364 residues long: Trans-enoyl reductase ccsC (364 aa).

52-55 (CDYK) contacts NADP(+). 141–148 (TGLATLGM) contacts substrate. Residues 176-179 (SSSV), 199-202 (SPRN), tyrosine 217, and 264-265 (LE) contribute to the NADP(+) site. 284–288 (GPALL) is a substrate binding site. 353–354 (VS) is an NADP(+) binding site.

The protein belongs to the zinc-containing alcohol dehydrogenase family. In terms of assembly, monomer.

It functions in the pathway mycotoxin biosynthesis. Trans-enoyl reductase; part of the gene cluster that mediates the biosynthesis of a family of the mycotoxins cytochalasins E and K. The hybrid PKS-NRPS synthetase ccsA and the enoyl reductase ccsC are responsible for fusion of phenylalanine with an octaketide backbone and subsequent release of the stable tetramic acid precursor. The polyketide synthase module (PKS) of the PKS-NRPS ccsA is responsible for the synthesis of the octaketide backbone. The downstream nonribosomal peptide synthetase (NRPS) amidates the carboxyl end of the octaketide with a phenylalanine. A reductase-like domain (R) at the C-terminus catalyzes the reductive release of the polyketide-amino acid intermediate. Because ccsA lacks a designated enoylreductase (ER) domain, the required activity is provided the enoyl reductase ccsC. Upon formation of the 11-membered carbocycle-fused perhydroisoindolone intermediate, a number of oxidative steps are required to afford the final cytochalasin E and K, including two hydroxylations at C17 and C18, one alcohol oxidation at C17, one epoxidation at C6 and C7 and two Baeyer-Villiger oxidations. The oxidative modification at C17, C18 and the C6-C7 epoxidation are likely to be catalyzed by the two cytochrome P450 oxygenases ccsD and ccsG. CcsD may be responsible for the epoxidation of the C6-C7 double bond. CcsG may be responsible for the successive oxidative modifications at C17 and C18. The double Baeyer-Villiger oxidations of ketocytochalasin to precytochalasin and cytochalasin Z(16) are among the final steps leading to cytochalasin E and K and are catalyzed by ccsB. The first oxygen insertion step follows that of the classic BVMO mechanism, generating the ester precytochalasin. Release of precytochalasin into an aqueous environment can generate the shunt product iso-precytochalasin through spontaneous isomerization. Alternatively, precytochalasin can undergo further oxidation by ccsB to yield the in-line carbonate-containing cytochalasin Z(16). Cytochalasin Z(16) is a precursor to cytochalasin E and cytochalasin K, whereas iso-precytochalasin is a precursor to cytochalasin Z(17) and rosellichalasin. The hydrolyase ccsE may catalyze hydrolysis of epoxide bond in cytochalasin E to afford cytochalasin K. The function of ccsF has not been assigned but it may play a role in post-PKS-NRPS biosynthetic step, resistance or transport of cytochalasins and related PKS-NRPS products. This Aspergillus clavatus (strain ATCC 1007 / CBS 513.65 / DSM 816 / NCTC 3887 / NRRL 1 / QM 1276 / 107) protein is Trans-enoyl reductase ccsC.